Here is a 388-residue protein sequence, read N- to C-terminus: Large ribosomal subunit protein uL3A (388 aa).

Over residues 1 to 10 (MSHCKFEQPR) the composition is skewed to basic and acidic residues. Positions 1–34 (MSHCKFEQPRHGSLGFLPRKRASRQRGKVKAFPK) are disordered. S13 bears the Phosphoserine mark. A compositionally biased stretch (basic residues) spans 18–31 (PRKRASRQRGKVKA). S65, S140, S143, S207, S295, and S355 each carry phosphoserine. The residue at position 372 (T372) is a Phosphothreonine.

Belongs to the universal ribosomal protein uL3 family. Component of the large ribosomal subunit (LSU). Mature yeast ribosomes consist of a small (40S) and a large (60S) subunit. The 40S small subunit contains 1 molecule of ribosomal RNA (18S rRNA) and at least 33 different proteins. The large 60S subunit contains 3 rRNA molecules (25S, 5.8S and 5S rRNA) and at least 46 different proteins. uL3 forms together with ES39L one of the contact sites for the signal recognition particle that targets ribosomes to the endoplasmic reticulum membrane.

It is found in the cytoplasm. Component of the ribosome, a large ribonucleoprotein complex responsible for the synthesis of proteins in the cell. The small ribosomal subunit (SSU) binds messenger RNAs (mRNAs) and translates the encoded message by selecting cognate aminoacyl-transfer RNA (tRNA) molecules. The large subunit (LSU) contains the ribosomal catalytic site termed the peptidyl transferase center (PTC), which catalyzes the formation of peptide bonds, thereby polymerizing the amino acids delivered by tRNAs into a polypeptide chain. The nascent polypeptides leave the ribosome through a tunnel in the LSU and interact with protein factors that function in enzymatic processing, targeting, and the membrane insertion of nascent chains at the exit of the ribosomal tunnel. uL3 plays a role in coordinating processes of accommodating the aminoacyl-tRNA in the PTC. The chain is Large ribosomal subunit protein uL3A (rpl301) from Schizosaccharomyces pombe (strain 972 / ATCC 24843) (Fission yeast).